Consider the following 600-residue polypeptide: Elongation factor 4 (600 aa).

Positions 5-187 constitute a tr-type G domain; sequence KYIRNFSIVA…EIVEKIPAPE (183 aa). GTP-binding positions include 17–22 and 134–137; these read DHGKST and NKVD.

This sequence belongs to the TRAFAC class translation factor GTPase superfamily. Classic translation factor GTPase family. LepA subfamily.

It localises to the cell membrane. It carries out the reaction GTP + H2O = GDP + phosphate + H(+). In terms of biological role, required for accurate and efficient protein synthesis under certain stress conditions. May act as a fidelity factor of the translation reaction, by catalyzing a one-codon backward translocation of tRNAs on improperly translocated ribosomes. Back-translocation proceeds from a post-translocation (POST) complex to a pre-translocation (PRE) complex, thus giving elongation factor G a second chance to translocate the tRNAs correctly. Binds to ribosomes in a GTP-dependent manner. The sequence is that of Elongation factor 4 from Clostridium perfringens (strain 13 / Type A).